Here is a 37-residue protein sequence, read N- to C-terminus: Cytochrome b6-f complex subunit 5 (37 aa).

A helical transmembrane segment spans residues 5 to 25; sequence LLCGIVLGLIPVTLLGLFVAA.

The protein belongs to the PetG family. As to quaternary structure, the 4 large subunits of the cytochrome b6-f complex are cytochrome b6, subunit IV (17 kDa polypeptide, PetD), cytochrome f and the Rieske protein, while the 4 small subunits are PetG, PetL, PetM and PetN. The complex functions as a dimer.

The protein resides in the cellular thylakoid membrane. In terms of biological role, component of the cytochrome b6-f complex, which mediates electron transfer between photosystem II (PSII) and photosystem I (PSI), cyclic electron flow around PSI, and state transitions. PetG is required for either the stability or assembly of the cytochrome b6-f complex. The chain is Cytochrome b6-f complex subunit 5 from Synechococcus sp. (strain WH7803).